The chain runs to 646 residues: MSTAPSLSALRSSKHSGGGGGGGGGGGADPAWTSALSGNSSGPGPGSSPAGSTKPFVHAVPPSDPLRQANRLPIKVLKMLTARTGHILHPEYLQPLPSTPVSPIELDAKKSPLALLAQTCSQIGKPDPSPSSKLSSVASNGGGAGGAGGGAAGDKDTKSGPLKLSDIGVEDKSSFKPYSKPGSDKKEPGGGGGGGGGGGGGGGGVSSEKSGFRVPSATCQPFTPRTGSPSSSASACSPGGMLSSAGGAPEGKDDKKDTDVGGGGKGTGGASAEGGPTGLAHGRISCGGGINVDVNQHPDGGPGGKALGSDCGGSSGSSSGSGPSAPTSSSVLGSGLVAPVSPYKPGQTVFPLPPAGMTYPGSLAGAYAGYPPQFLPHGVALDPTKPGSLVGAQLAAAAAGSLGCSKPAGSSPLAGASPPSVMTASLCRDPYCLSYHCASHLAGAAAASASCAHDPAAAAAALKSGYPLVYPTHPLHGVHSSLTAAAAAGATPPSLAGHPLYPYGFMLPNDPLPHICNWVSANGPCDKRFATSEELLSHLRTHTAFPGTDKLLSGYPSSSSLASAAAAAMACHMHIPTSGAPGSPGTLALRSPHHALGLSSRYHPYSKSPLPTPGAPVPVPAATGPYYSPYALYGQRLTTASALGYQ.

Residues 1–11 (MSTAPSLSALR) show a composition bias toward polar residues. The segment at 1–70 (MSTAPSLSAL…PPSDPLRQAN (70 aa)) is disordered. Over residues 16 to 28 (SGGGGGGGGGGGA) the composition is skewed to gly residues. Residues 34–52 (SALSGNSSGPGPGSSPAGS) are compositionally biased toward low complexity. Residue serine 102 is modified to Phosphoserine. The disordered stretch occupies residues 121-332 (SQIGKPDPSP…PSAPTSSSVL (212 aa)). Residues 130-139 (PSSKLSSVAS) show a composition bias toward low complexity. Gly residues-rich tracts occupy residues 140 to 152 (NGGG…GGAA) and 189 to 205 (GGGG…GGGV). Lysine 209 carries the post-translational modification N6-acetyllysine. Positions 217 to 226 (ATCQPFTPRT) are enriched in polar residues. Over residues 227–240 (GSPSSSASACSPGG) the composition is skewed to low complexity. Phosphoserine is present on residues serine 231 and serine 237. Positions 250 to 259 (EGKDDKKDTD) are enriched in basic and acidic residues. Composition is skewed to gly residues over residues 260 to 277 (VGGG…GGPT) and 300 to 315 (GGPG…GGSS). Residues 316–330 (GSSSGSGPSAPTSSS) show a composition bias toward low complexity. A C2H2-type zinc finger spans residues 514-542 (HICNWVSANGPCDKRFATSEELLSHLRTH). Omega-N-methylarginine is present on arginine 636.

The protein belongs to the Elbow/Noc family.

Its subcellular location is the nucleus. In terms of biological role, may function as a transcriptional repressor. The protein is Zinc finger protein 503 (ZNF503) of Homo sapiens (Human).